We begin with the raw amino-acid sequence, 144 residues long: uncharacterized protein (144 aa).

The HTH lysR-type domain maps to 1 to 58; it reads MDLASLNAFIAVAETGSFSEAGERLHLTQPAVSKRIAALEQQLQVRLFDRLGREVRLT. The segment at residues 18 to 38 is a DNA-binding region (H-T-H motif); it reads FSEAGERLHLTQPAVSKRIAA.

It belongs to the LysR transcriptional regulatory family.

This is an uncharacterized protein from Azotobacter vinelandii.